We begin with the raw amino-acid sequence, 182 residues long: Lipoprotein signal peptidase (182 aa).

4 helical membrane passes run 15-35 (IYLGVIFLGIVLDLVTKFLVI), 44-64 (LEVFGSFFRMTLTFNTGFVFG), 65-85 (AFQDNAIPSLIATGVAIVFLI), and 97-117 (PWGWNLVMAGAFGNFLDKFFV). Residues D140 and D162 contribute to the active site. Residues 155–175 (WPAFNVADSCVTIGLTILIFT) form a helical membrane-spanning segment.

Belongs to the peptidase A8 family.

Its subcellular location is the cell inner membrane. It catalyses the reaction Release of signal peptides from bacterial membrane prolipoproteins. Hydrolyzes -Xaa-Yaa-Zaa-|-(S,diacylglyceryl)Cys-, in which Xaa is hydrophobic (preferably Leu), and Yaa (Ala or Ser) and Zaa (Gly or Ala) have small, neutral side chains.. It functions in the pathway protein modification; lipoprotein biosynthesis (signal peptide cleavage). This protein specifically catalyzes the removal of signal peptides from prolipoproteins. This is Lipoprotein signal peptidase from Leptospira interrogans serogroup Icterohaemorrhagiae serovar Lai (strain 56601).